The following is a 40-amino-acid chain: Peroxisomal LYS1 stabilizing protein 1 (40 aa).

Residues 1-10 show a composition bias toward polar residues; it reads MTAKTKQSWN. Positions 1–20 are disordered; sequence MTAKTKQSWNKGIWENGKQG.

Its subcellular location is the cytoplasm. It is found in the cytosol. The protein localises to the peroxisome matrix. Modulates the lysine biosynthesis pathway, possibly by stabilizing the lysine biosynthesis LYS1 protein in lysine-deplete conditions. This is Peroxisomal LYS1 stabilizing protein 1 from Saccharomyces cerevisiae (strain ATCC 204508 / S288c) (Baker's yeast).